A 576-amino-acid chain; its full sequence is Protein alan shepard (576 aa).

Over residues 1 to 12 the composition is skewed to pro residues; sequence MHPRYSPAPPPQ. The segment at 1-66 is disordered; that stretch reads MHPRYSPAPP…GSSSSAAAAP (66 aa). At Tyr5 the chain carries Phosphotyrosine. Over residues 13 to 24 the composition is skewed to low complexity; sequence QQQQMGGPPHQQ. The segment covering 25 to 35 has biased composition (gly residues); the sequence is QGGGGGGGGNM. The segment covering 37–54 has biased composition (polar residues); sequence GPSNAQQLPPQIPRSQNY. Over residues 55–66 the composition is skewed to low complexity; sequence SNGSSSSAAAAP. Tyr125 and Tyr142 each carry phosphotyrosine. The segment at 164–225 is disordered; the sequence is PATTTYGQRV…TVQNQNQQGG (62 aa). Positions 178–225 are enriched in low complexity; sequence SPSNTNSSSSSNTGSQSGTLSTSLSNTTNTNTNMGPNGTVQNQNQQGG. RRM domains follow at residues 231-302 and 308-387; these read TNLY…MAKQ and TNLY…FADG. The segment at 538–576 is disordered; it reads YAPPPTIIPTMPMTDSEQASTAASPDEAYTQYPHQAAPK.

Has a role in the perception of gravity. This Drosophila simulans (Fruit fly) protein is Protein alan shepard.